A 474-amino-acid polypeptide reads, in one-letter code: tRNA-2-methylthio-N(6)-dimethylallyladenosine synthase (474 aa).

An MTTase N-terminal domain is found at 3–120; that stretch reads KKLHIKTWGC…LPEMINSVRG (118 aa). [4Fe-4S] cluster is bound by residues Cys12, Cys49, Cys83, Cys157, Cys161, and Cys164. In terms of domain architecture, Radical SAM core spans 143-375; that stretch reads RAEGPTAFVS…QERINQQAMA (233 aa). The TRAM domain occupies 378–441; sequence RRMLGTTQRI…PNSLRGKVVR (64 aa).

It belongs to the methylthiotransferase family. MiaB subfamily. As to quaternary structure, monomer. It depends on [4Fe-4S] cluster as a cofactor.

The protein localises to the cytoplasm. It carries out the reaction N(6)-dimethylallyladenosine(37) in tRNA + (sulfur carrier)-SH + AH2 + 2 S-adenosyl-L-methionine = 2-methylsulfanyl-N(6)-dimethylallyladenosine(37) in tRNA + (sulfur carrier)-H + 5'-deoxyadenosine + L-methionine + A + S-adenosyl-L-homocysteine + 2 H(+). Functionally, catalyzes the methylthiolation of N6-(dimethylallyl)adenosine (i(6)A), leading to the formation of 2-methylthio-N6-(dimethylallyl)adenosine (ms(2)i(6)A) at position 37 in tRNAs that read codons beginning with uridine. The protein is tRNA-2-methylthio-N(6)-dimethylallyladenosine synthase of Escherichia coli O81 (strain ED1a).